A 352-amino-acid chain; its full sequence is uncharacterized protein (352 aa).

The segment at 1-40 is disordered; it reads MTSTMKLFTDHAEISVRERPPQRNNNNQEQDNSNRPAPRR. Residues 8 to 21 show a composition bias toward basic and acidic residues; the sequence is FTDHAEISVRERPP. The span at 22 to 36 shows a compositional bias: low complexity; it reads QRNNNNQEQDNSNRP. Residues 317–333 traverse the membrane as a helical segment; it reads MTITLPCGLTIAFFVYY.

It localises to the host cell membrane. This is an uncharacterized protein from Diadromus pulchellus idnoreovirus 1 (DpIRV-1).